The sequence spans 382 residues: 6-hydroxynicotinate 3-monooxygenase (382 aa).

The signal sequence occupies residues 1–25 (MRGRQKIAIVGAGLGGAAAATLLQQ). Residues G15, 34 to 35 (EQ), H47, R108, and L130 contribute to the FAD site. H47 acts as the Proton acceptor in catalysis. Y215 (proton acceptor) is an active-site residue. FAD is bound by residues D294 and 307–308 (AC).

The protein belongs to the 6-hydroxynicotinate 3-monooxygenase family. As to quaternary structure, monomer. FAD serves as cofactor.

The enzyme catalyses 6-hydroxynicotinate + NADH + O2 + 2 H(+) = 2,5-dihydroxypyridine + CO2 + NAD(+) + H2O. Its pathway is cofactor degradation; nicotinate degradation. Flavin-dependent monooxygenase (FMO) that catalyzes the decarboxylative hydroxylation of 6-hydroxynicotinic acid (6-HNA) to 2,5-dihydroxypyridine (2,5-DHP) with concomitant oxidation of NADH, a step in the aerobic nicotinate degradation pathway. This is 6-hydroxynicotinate 3-monooxygenase from Pseudomonas putida (strain ATCC 47054 / DSM 6125 / CFBP 8728 / NCIMB 11950 / KT2440).